A 146-amino-acid chain; its full sequence is Hemoglobin subunit beta-1 (146 aa).

One can recognise a Globin domain in the interval 2 to 146; the sequence is KWSDKERAVI…VVSALGKQYC (145 aa). Heme b-binding residues include His63 and His92.

It belongs to the globin family. As to quaternary structure, hb1 is a heterotetramer of two alpha-1 chains and two beta-1 chains; Hb2 is a heterotetramer of two alpha-2 chains and two beta-1 chains. Red blood cells.

In terms of biological role, involved in oxygen transport from gills to the various peripheral tissues. This chain is Hemoglobin subunit beta-1 (hbb1), found in Anarhichas minor (Arctic spotted wolffish).